The sequence spans 90 residues: [Leu8]-phyllolitorin (90 aa).

The signal sequence occupies residues 1–30; sequence MSAVPFTRVLLISGFLAHLLLSTFVTLTVC. A propeptide spanning residues 31–48 is cleaved from the precursor; sequence KEVTEESDDLSKRNVLQR. Gln49 carries the pyrrolidone carboxylic acid modification. At Met57 the chain carries Methionine amide. The propeptide occupies 61-90; that stretch reads SLENTNRRSDEDMEISALFRGSPLKVKRSD.

This sequence belongs to the bombesin/neuromedin-B/ranatensin family. In terms of tissue distribution, expressed by the skin glands.

It localises to the secreted. The sequence is that of [Leu8]-phyllolitorin from Phyllomedusa sauvagei (Sauvage's leaf frog).